Reading from the N-terminus, the 456-residue chain is Putative dihydroorotase (456 aa).

It belongs to the metallo-dependent hydrolases superfamily. DHOase family. Class I DHOase subfamily.

It catalyses the reaction (S)-dihydroorotate + H2O = N-carbamoyl-L-aspartate + H(+). The protein operates within pyrimidine metabolism; UMP biosynthesis via de novo pathway; (S)-dihydroorotate from bicarbonate: step 3/3. Its function is as follows. Catalyzes the reversible cyclization of carbamoyl aspartate to dihydroorotate. The sequence is that of Putative dihydroorotase from Rhodopirellula baltica (strain DSM 10527 / NCIMB 13988 / SH1).